The primary structure comprises 194 residues: Putative 3-methyladenine DNA glycosylase (194 aa).

The protein belongs to the DNA glycosylase MPG family.

This Myxococcus xanthus (strain DK1622) protein is Putative 3-methyladenine DNA glycosylase.